Reading from the N-terminus, the 213-residue chain is Peptidyl-tRNA hydrolase (213 aa).

Tyr-15 lines the tRNA pocket. His-20 serves as the catalytic Proton acceptor. TRNA-binding residues include Tyr-66, Asn-68, and Asn-114. The segment at Met-186–Ala-213 is disordered. Over residues Pro-196–Ala-213 the composition is skewed to pro residues.

The protein belongs to the PTH family. In terms of assembly, monomer.

It is found in the cytoplasm. The enzyme catalyses an N-acyl-L-alpha-aminoacyl-tRNA + H2O = an N-acyl-L-amino acid + a tRNA + H(+). Hydrolyzes ribosome-free peptidyl-tRNAs (with 1 or more amino acids incorporated), which drop off the ribosome during protein synthesis, or as a result of ribosome stalling. Functionally, catalyzes the release of premature peptidyl moieties from peptidyl-tRNA molecules trapped in stalled 50S ribosomal subunits, and thus maintains levels of free tRNAs and 50S ribosomes. The chain is Peptidyl-tRNA hydrolase from Leptothrix cholodnii (strain ATCC 51168 / LMG 8142 / SP-6) (Leptothrix discophora (strain SP-6)).